We begin with the raw amino-acid sequence, 220 residues long: Peptidyl-tRNA hydrolase (220 aa).

Tyr-14 lines the tRNA pocket. His-19 serves as the catalytic Proton acceptor. TRNA contacts are provided by Phe-66, Asn-68, and Asn-114. The interval 184 to 220 is disordered; sequence QAFNSTDLRPRPEPVPAPQPADVSGPQETGPAERPEV.

Belongs to the PTH family. Monomer.

It localises to the cytoplasm. The catalysed reaction is an N-acyl-L-alpha-aminoacyl-tRNA + H2O = an N-acyl-L-amino acid + a tRNA + H(+). Its function is as follows. Hydrolyzes ribosome-free peptidyl-tRNAs (with 1 or more amino acids incorporated), which drop off the ribosome during protein synthesis, or as a result of ribosome stalling. Functionally, catalyzes the release of premature peptidyl moieties from peptidyl-tRNA molecules trapped in stalled 50S ribosomal subunits, and thus maintains levels of free tRNAs and 50S ribosomes. The polypeptide is Peptidyl-tRNA hydrolase (Deinococcus deserti (strain DSM 17065 / CIP 109153 / LMG 22923 / VCD115)).